A 604-amino-acid polypeptide reads, in one-letter code: Putative O-acetyltransferase SAV0974 (604 aa).

11 consecutive transmembrane segments (helical) span residues 15 to 35 (YMPG…IYHL), 43 to 63 (GFLG…SLLL), 85 to 105 (LLPA…LLKS), 150 to 170 (AIEE…LLTI), 176 to 196 (IGFI…FIYS), 212 to 232 (LQTL…KLKN), 240 to 260 (YVID…FFII), 267 to 287 (IYDG…ASVV), 310 to 330 (YSLY…YVDG), 332 to 352 (IPVY…ELSY), and 377 to 397 (FIRM…LVGA). Residues Ser-459, Asp-581, and His-584 contribute to the active site.

It belongs to the acyltransferase 3 family.

The protein localises to the cell membrane. This is Putative O-acetyltransferase SAV0974 from Staphylococcus aureus (strain Mu50 / ATCC 700699).